The primary structure comprises 20 residues: Dihydroorotase-like protein (20 aa).

It belongs to the metallo-dependent hydrolases superfamily. DHOase family. PyrC' subfamily. As to quaternary structure, heterododecamer of 6 active PyrB subunits and 6 non-catalytic PyrC' subunits.

Functionally, non-functional DHOase. This is Dihydroorotase-like protein (pyrC') from Pseudomonas fluorescens biotype A.